Here is a 426-residue protein sequence, read N- to C-terminus: Histidine--tRNA ligase (426 aa).

It belongs to the class-II aminoacyl-tRNA synthetase family. In terms of assembly, homodimer.

It is found in the cytoplasm. It carries out the reaction tRNA(His) + L-histidine + ATP = L-histidyl-tRNA(His) + AMP + diphosphate + H(+). In Shewanella baltica (strain OS195), this protein is Histidine--tRNA ligase.